The following is a 256-amino-acid chain: MKEPLKIGLMDSGMGGLSVLKELLKYDSELEIVYYGDLKNSPYGEKDASEVLELVRSVCNFLQKENVSAILLACNTATSAAAQTLRKEFSIPIFGMEPAIKPAILQNPGKKVALLATPVTQREEKLQRLKSELKAEELVLSISCPGLAGLVDQGDFDKAEKYLRPILANLQEQDVENLVLGCTHYVFLKQIILKNFPNVKIYDGNSGTIKHLLNSLQVPRVILNGSQNNRSIYKLILNSEKEFHFRLASELLSLKE.

Substrate-binding positions include aspartate 11–serine 12 and tyrosine 43–glycine 44. Residue cysteine 74 is the Proton donor/acceptor of the active site. Asparagine 75–threonine 76 is a binding site for substrate. The Proton donor/acceptor role is filled by cysteine 182. Threonine 183–histidine 184 is a binding site for substrate.

It belongs to the aspartate/glutamate racemases family.

The catalysed reaction is L-glutamate = D-glutamate. It participates in cell wall biogenesis; peptidoglycan biosynthesis. In terms of biological role, provides the (R)-glutamate required for cell wall biosynthesis. The polypeptide is Glutamate racemase (Leptospira interrogans serogroup Icterohaemorrhagiae serovar Lai (strain 56601)).